The following is a 215-amino-acid chain: Thymidylate kinase (215 aa).

Residue 11–18 (GIDGAGKS) participates in ATP binding.

It belongs to the thymidylate kinase family.

The catalysed reaction is dTMP + ATP = dTDP + ADP. Functionally, phosphorylation of dTMP to form dTDP in both de novo and salvage pathways of dTTP synthesis. In Nitrosomonas europaea (strain ATCC 19718 / CIP 103999 / KCTC 2705 / NBRC 14298), this protein is Thymidylate kinase.